A 193-amino-acid chain; its full sequence is dCTP deaminase (193 aa).

DCTP contacts are provided by residues 110–115 (RSSLAR), Asp128, 136–138 (VLE), Tyr171, Lys178, and Gln182. The active-site Proton donor/acceptor is the Glu138. Residues 170–181 (PYNRRQDAKYRD) show a composition bias toward basic and acidic residues. The segment at 170-193 (PYNRRQDAKYRDQQGAVASRIDKD) is disordered.

It belongs to the dCTP deaminase family. In terms of assembly, homotrimer.

It carries out the reaction dCTP + H2O + H(+) = dUTP + NH4(+). It participates in pyrimidine metabolism; dUMP biosynthesis; dUMP from dCTP (dUTP route): step 1/2. Functionally, catalyzes the deamination of dCTP to dUTP. This is dCTP deaminase from Enterobacter sp. (strain 638).